A 358-amino-acid chain; its full sequence is Probable butyrate kinase (358 aa).

It belongs to the acetokinase family.

The protein localises to the cytoplasm. It carries out the reaction butanoate + ATP = butanoyl phosphate + ADP. The protein is Probable butyrate kinase of Oceanobacillus iheyensis (strain DSM 14371 / CIP 107618 / JCM 11309 / KCTC 3954 / HTE831).